A 92-amino-acid polypeptide reads, in one-letter code: Small ribosomal subunit protein uS19 (92 aa).

This sequence belongs to the universal ribosomal protein uS19 family.

Functionally, protein S19 forms a complex with S13 that binds strongly to the 16S ribosomal RNA. In Lachnoclostridium phytofermentans (strain ATCC 700394 / DSM 18823 / ISDg) (Clostridium phytofermentans), this protein is Small ribosomal subunit protein uS19.